The chain runs to 99 residues: Aspartyl/glutamyl-tRNA(Asn/Gln) amidotransferase subunit C (99 aa).

Belongs to the GatC family. Heterotrimer of A, B and C subunits.

It catalyses the reaction L-glutamyl-tRNA(Gln) + L-glutamine + ATP + H2O = L-glutaminyl-tRNA(Gln) + L-glutamate + ADP + phosphate + H(+). The catalysed reaction is L-aspartyl-tRNA(Asn) + L-glutamine + ATP + H2O = L-asparaginyl-tRNA(Asn) + L-glutamate + ADP + phosphate + 2 H(+). Allows the formation of correctly charged Asn-tRNA(Asn) or Gln-tRNA(Gln) through the transamidation of misacylated Asp-tRNA(Asn) or Glu-tRNA(Gln) in organisms which lack either or both of asparaginyl-tRNA or glutaminyl-tRNA synthetases. The reaction takes place in the presence of glutamine and ATP through an activated phospho-Asp-tRNA(Asn) or phospho-Glu-tRNA(Gln). The sequence is that of Aspartyl/glutamyl-tRNA(Asn/Gln) amidotransferase subunit C from Paraburkholderia xenovorans (strain LB400).